Consider the following 228-residue polypeptide: Eukaryotic translation initiation factor 6 (228 aa).

This sequence belongs to the eIF-6 family. As to quaternary structure, monomer. Associates with the 60S ribosomal subunit.

It localises to the cytoplasm. The protein resides in the nucleus. It is found in the nucleolus. Functionally, binds to the 60S ribosomal subunit and prevents its association with the 40S ribosomal subunit to form the 80S initiation complex in the cytoplasm. May also be involved in ribosome biogenesis. The sequence is that of Eukaryotic translation initiation factor 6 from Guillardia theta (Cryptophyte).